The primary structure comprises 207 residues: Putative 3-methyladenine DNA glycosylase (207 aa).

Belongs to the DNA glycosylase MPG family.

This is Putative 3-methyladenine DNA glycosylase from Listeria welshimeri serovar 6b (strain ATCC 35897 / DSM 20650 / CCUG 15529 / CIP 8149 / NCTC 11857 / SLCC 5334 / V8).